We begin with the raw amino-acid sequence, 145 residues long: D-aminoacyl-tRNA deacylase (145 aa).

Positions 137–138 (GP) match the Gly-cisPro motif, important for rejection of L-amino acids motif.

The protein belongs to the DTD family. In terms of assembly, homodimer.

Its subcellular location is the cytoplasm. It catalyses the reaction glycyl-tRNA(Ala) + H2O = tRNA(Ala) + glycine + H(+). The enzyme catalyses a D-aminoacyl-tRNA + H2O = a tRNA + a D-alpha-amino acid + H(+). In terms of biological role, an aminoacyl-tRNA editing enzyme that deacylates mischarged D-aminoacyl-tRNAs. Also deacylates mischarged glycyl-tRNA(Ala), protecting cells against glycine mischarging by AlaRS. Acts via tRNA-based rather than protein-based catalysis; rejects L-amino acids rather than detecting D-amino acids in the active site. By recycling D-aminoacyl-tRNA to D-amino acids and free tRNA molecules, this enzyme counteracts the toxicity associated with the formation of D-aminoacyl-tRNA entities in vivo and helps enforce protein L-homochirality. This Alcanivorax borkumensis (strain ATCC 700651 / DSM 11573 / NCIMB 13689 / SK2) protein is D-aminoacyl-tRNA deacylase.